The sequence spans 287 residues: Nucleoid occlusion protein (287 aa).

The segment at residues 146–165 (EALAQRVGKSQSAIANKMRL) is a DNA-binding region (H-T-H motif).

The protein belongs to the ParB family.

Its subcellular location is the cytoplasm. The protein resides in the nucleoid. Effects nucleoid occlusion by binding relatively nonspecifically to DNA and preventing the assembly of the division machinery in the vicinity of the nucleoid, especially under conditions that disturb the cell cycle. It helps to coordinate cell division and chromosome segregation by preventing the formation of the Z ring through the nucleoid, which would cause chromosome breakage. The polypeptide is Nucleoid occlusion protein (Listeria monocytogenes serotype 4a (strain HCC23)).